A 141-amino-acid polypeptide reads, in one-letter code: Auxin-responsive protein SAUR63 (141 aa).

Belongs to the ARG7 family. As to expression, expressed in hypocotyls, cotyledons, petioles, young rosette leaves, apical portion of inflorescence stems, stamen filaments and petals.

It localises to the cell membrane. Functionally, may promote auxin-stimulated organ elongation, such as hypocotyls, stamen filaments and petals. The protein is Auxin-responsive protein SAUR63 of Arabidopsis thaliana (Mouse-ear cress).